The following is a 560-amino-acid chain: Arginine--tRNA ligase (560 aa).

The short motif at 121–131 (PNIAKPFSMGH) is the 'HIGH' region element.

This sequence belongs to the class-I aminoacyl-tRNA synthetase family. As to quaternary structure, monomer.

The protein resides in the cytoplasm. It catalyses the reaction tRNA(Arg) + L-arginine + ATP = L-arginyl-tRNA(Arg) + AMP + diphosphate. The chain is Arginine--tRNA ligase from Exiguobacterium sp. (strain ATCC BAA-1283 / AT1b).